A 1036-amino-acid polypeptide reads, in one-letter code: Integrin alpha-9 (1036 aa).

A signal peptide spans 1–28 (MGGPAAARTGAGGLRALLLALVAAGVPA). The Extracellular portion of the chain corresponds to 29–981 (GAYNLDAQRP…NLEPRGYVVG (953 aa)). FG-GAP repeat units follow at residues 36–97 (QRPV…PDRR), 109–175 (RGAP…AKGK), 183–233 (EYKK…NTYF), 234–290 (KLND…SGTL), 291–350 (IKIF…GALE), 352–409 (QLTL…GIVP), and 412–475 (SMKL…LPGS). Disulfide bonds link C88–C98, C143–C163, and C180–C195. N226 carries an N-linked (GlcNAc...) asparagine glycan. Residues D313, N315, D317, D321, D374, D376, D378, D382, D436, D438, N440, and D444 each coordinate Ca(2+). A disulfide bridge connects residues C483 and C492. N-linked (GlcNAc...) asparagine glycosylation is found at N494 and N515. Cystine bridges form between C498–C556, C621–C626, and C697–C707. N-linked (GlcNAc...) asparagine glycosylation occurs at N808. 2 cysteine pairs are disulfide-bonded: C856–C892 and C899–C904. The chain crosses the membrane as a helical span at residues 982–1002 (WIIAISLLVGILIFLLLAVLL). The Cytoplasmic portion of the chain corresponds to 1003-1036 (WKMGFFRRRYKEIIEAEKNRKENEDGWDWVQKNQ). The short motif at 1006–1010 (GFFRR) is the GFFKR motif element.

This sequence belongs to the integrin alpha chain family. As to quaternary structure, heterodimer of an alpha and a beta subunit. Alpha-9 (ITGA9) associates with beta-1 (ITGB1). Integrin ITGA9:ITGB1 interacts with FBLN5 (via N-terminus). Integrin ITGA9:ITGB1 interacts with SPP1/OPN (via N-terminus). Integrin ITGA9:ITGB1 interacts with TNC/TNFN3 (via the 3rd Fibronectin type-III domain). Integrin ITGA9:ITGB1 interacts with SVEP1/polydom (via Sushi domain 21); thereby inhibits Ca(2+) intracellular signaling and as a result represses vasocontraction. As to expression, expressed in the media layer of the arterial wall (at protein level). Expressed in the airway epithelium, skeletal muscle, basal keratincytes, the basal epithelium of the cornea, hepatocytes, giant cells in the spleen and smooth muscle of the stomach, duodenum and veins (at protein level).

The protein localises to the membrane. Its function is as follows. Integrin alpha-9/beta-1 (ITGA9:ITGB1) is a receptor for VCAM1, cytotactin and osteopontin. It recognizes the sequence A-E-I-D-G-I-E-L in cytotactin. ITGA9:ITGB1 may play a crucial role in SVEP1/polydom-mediated myoblast cell adhesion. Integrin ITGA9:ITGB1 represses PRKCA-mediated L-type voltage-gated channel Ca(2+) influx and ROCK-mediated calcium sensitivity in vascular smooth muscle cells via its interaction with SVEP1, thereby inhibiting vasocontraction. The polypeptide is Integrin alpha-9 (Mus musculus (Mouse)).